The chain runs to 352 residues: tRNA-specific 2-thiouridylase MnmA (352 aa).

ATP contacts are provided by residues 6–13 (AMSGGVDS) and Leu32. Cys101 acts as the Nucleophile in catalysis. Cys101 and Cys194 are oxidised to a cystine. Residue Gly125 coordinates ATP. Residues 144–146 (KDQ) form an interaction with tRNA region. The Cysteine persulfide intermediate role is filled by Cys194.

The protein belongs to the MnmA/TRMU family.

It is found in the cytoplasm. The catalysed reaction is S-sulfanyl-L-cysteinyl-[protein] + uridine(34) in tRNA + AH2 + ATP = 2-thiouridine(34) in tRNA + L-cysteinyl-[protein] + A + AMP + diphosphate + H(+). Catalyzes the 2-thiolation of uridine at the wobble position (U34) of tRNA, leading to the formation of s(2)U34. The chain is tRNA-specific 2-thiouridylase MnmA from Frankia alni (strain DSM 45986 / CECT 9034 / ACN14a).